We begin with the raw amino-acid sequence, 371 residues long: uncharacterized protein (371 aa).

The 31-residue stretch at 110–140 folds into the 4Fe-4S ferredoxin-type domain; sequence MEKFIDFDRCNKCGECARKICKAKWTPLNYL.

This is an uncharacterized protein from Methanocaldococcus jannaschii (strain ATCC 43067 / DSM 2661 / JAL-1 / JCM 10045 / NBRC 100440) (Methanococcus jannaschii).